We begin with the raw amino-acid sequence, 340 residues long: Major histocompatibility complex class I-related gene protein (340 aa).

The first 22 residues, 1 to 22 (MGELMAFLLPLIIVLMVKHSNS), serve as a signal peptide directing secretion. Positions 23–109 (RTHSLRYFRL…KRLQRHYNHS (87 aa)) are alpha-1. An antigen-binding cleft region spans residues 23 to 201 (RTHSLRYFRL…EYGKDTLQRT (179 aa)). Residues 23 to 302 (RTHSLRYFRL…QESEAIPLVM (280 aa)) lie on the Extracellular side of the membrane. Y29 and R31 together coordinate 8-(9H-purin-6-yl)-2-oxa-8-azabicyclo[3.3.1]nona-3,6-diene-4,6-dicarbaldehyde. 3 residues coordinate 5-(2-oxoethylideneamino)-6-(D-ribitylamino)uracil: R31, S46, and K65. 5-(2-oxopropylideneamino)-6-(D-ribitylamino)uracil is bound by residues R31, S46, and K65. The 7-hydroxy-6-methyl-8-(1-D-ribityl)lumazine site is built by R31, S46, and K65. Residues K65 and H80 each coordinate 8-(9H-purin-6-yl)-2-oxa-8-azabicyclo[3.3.1]nona-3,6-diene-4,6-dicarbaldehyde. K65 contributes to the 2-amino-4-oxopteridine-6-carbaldehyde binding site. K65 provides a ligand contact to pyridoxal. An N-linked (GlcNAc...) asparagine glycan is attached at N107. The alpha-2 stretch occupies residues 110–201 (GSHTYQRMIG…EYGKDTLQRT (92 aa)). R116 provides a ligand contact to 8-(9H-purin-6-yl)-2-oxa-8-azabicyclo[3.3.1]nona-3,6-diene-4,6-dicarbaldehyde. Positions 116, 174, and 175 each coordinate 5-(2-oxoethylideneamino)-6-(D-ribitylamino)uracil. R116, Y174, and Q175 together coordinate 5-(2-oxopropylideneamino)-6-(D-ribitylamino)uracil. Residues R116, Y174, and Q175 each contribute to the 7-hydroxy-6-methyl-8-(1-D-ribityl)lumazine site. Intrachain disulfides connect C120/C183 and C222/C278. An alpha-3 region spans residues 202-293 (EPPLVRVNRK…GVHMVLQVPQ (92 aa)). Positions 203–282 (PPLVRVNRKE…SNLYSCHVEH (80 aa)) constitute an Ig-like C1-type domain. A connecting peptide region spans residues 294-302 (ESEAIPLVM). A helical transmembrane segment spans residues 303 to 323 (KAVSGSIVFVIVLTGVGVLVW). At 324 to 340 (RRRPREQNGAVYLPTPD) the chain is on the cytoplasmic side.

The protein belongs to the MHC class I family. Heterotrimer that consists of MR1, B2M and metabolite antigen. Major classes of metabolite ligands presented by MR1 include riboflavin-related antigens, pyrimidines and ribityl lumazines, nucleobase adducts and folate derivatives. Forms reversible covalent Schiff base complexes with microbial pyrimidine-based metabolite, which serves as a molecular switch triggering complete folding, stable association with B2M and translocation of the ternary complex from endoplasmic reticulum to the plasma membrane. Alternatively, forms non-Schiff base complexes with ribityl lumazines. On antigen-presenting cells, the ternary complex interacts with TCR on MR1-restricted T cells. Interacts with TAPBP and TAPBPL chaperones in the endoplasmic reticulum. TAPBP associated or not with MHC class I peptide loading complex binds ligand-free MR1 or MR1-B2M complex, providing for stable MR1 pools ready for metabolite antigen processing. TAPBPL interacts with MR1 in a ligand-independent way; this interaction may stabilize MR1 pool and facilitate ligand loading and dissociation. Structurally, MR1-B2M heterodimer adopts a topology similar to classical MHC class I molecules, with alpha-1 and alpha-2 domains of MR1 forming the antigen-binding cleft composed of two alpha-helices resting on a floor of 7-stranded anti-parallel beta-pleated sheet. MR1-B2M heterodimer (via alpha-helices) interacts with TCR (via CDR domains). In terms of processing, N-glycosylated.

Its subcellular location is the cell membrane. The protein resides in the endoplasmic reticulum membrane. The protein localises to the golgi apparatus membrane. It localises to the early endosome membrane. It is found in the late endosome membrane. In terms of biological role, antigen-presenting molecule specialized in displaying microbial pyrimidine-based metabolites to alpha-beta T cell receptors (TCR) on innate-type mucosal-associated invariant T (MAIT) cells. In complex with B2M preferentially presents riboflavin-derived metabolites to semi-invariant TCRs on MAIT cells, guiding immune surveillance of the microbial metabolome at mucosal epithelial barriers. Signature pyrimidine-based microbial antigens are generated via non-enzymatic condensation of metabolite intermediates of the riboflavin pathway with by-products arising from other metabolic pathways such as glycolysis. Typical potent antigenic metabolites are 5-(2-oxoethylideneamino)-6-D-ribitylaminouracil (5-OE-RU) and 5-(2-oxopropylideneamino)-6-D-ribitylaminouracil (5-OP-RU), products of condensation of 5-amino-6-D-ribityaminouracil (5-A-RU) with glyoxal or methylglyoxal by-products, respectively. May present microbial antigens to various MAIT cell subsets, providing for unique recognition of diverse microbes, including pathogens that do not synthesize riboflavin. Upon antigen recognition, elicits rapid innate-type MAIT cell activation to eliminate pathogenic microbes by directly killing infected cells. During T cell development, drives thymic selection and post-thymic terminal differentiation of MAIT cells in a process dependent on commensal microflora. Acts as an immune sensor of cancer cell metabolome. May present a tumor-specific or -associated metabolite essential for cancer cell survival to a pan-cancer TCR on a non-MAIT CD8-positive T cell clone, triggering T cell-mediated killing of a wide range of cancer cell types. May present tumor-enriched pyridoxal and pyridoxal 5'-phosphate antigens, enabling preferential recognition of cancer cells. Presents nucleobase carbonyl adducts generated during oxidative stress. Captures M3Ade, a nucleobase adduct composed of one adenine modified by a malondialdehyde trimer, for recognition by MR1-restricted T cell clones expressing a polyclonal TCR repertoire. In Pongo pygmaeus (Bornean orangutan), this protein is Major histocompatibility complex class I-related gene protein.